The primary structure comprises 77 residues: MQVLVRDNNVDQALRALKKKMQREGIFREMKMRGYYEKPSEKRAREKAEAIRRTRKLARKRAQREGLMSNGRISALR.

The segment at 55–77 is disordered; the sequence is RKLARKRAQREGLMSNGRISALR.

This sequence belongs to the bacterial ribosomal protein bS21 family.

This is Small ribosomal subunit protein bS21 from Bartonella quintana (strain Toulouse) (Rochalimaea quintana).